We begin with the raw amino-acid sequence, 558 residues long: CTP synthase (558 aa).

The amidoligase domain stretch occupies residues M1 to L270. S13 provides a ligand contact to CTP. S13 provides a ligand contact to UTP. Residues S14–I19 and D71 each bind ATP. Mg(2+) is bound by residues D71 and E144. CTP-binding positions include D151 to E153, K191 to Q196, and K227. UTP-binding positions include K191–Q196 and K227. The Glutamine amidotransferase type-1 domain maps to T295–K547. Residue G356 coordinates L-glutamine. Residue C383 is the Nucleophile; for glutamine hydrolysis of the active site. Residues L384–Q387, E407, and R473 each bind L-glutamine. Active-site residues include H520 and E522.

It belongs to the CTP synthase family. In terms of assembly, homotetramer.

It carries out the reaction UTP + L-glutamine + ATP + H2O = CTP + L-glutamate + ADP + phosphate + 2 H(+). The catalysed reaction is L-glutamine + H2O = L-glutamate + NH4(+). It catalyses the reaction UTP + NH4(+) + ATP = CTP + ADP + phosphate + 2 H(+). It participates in pyrimidine metabolism; CTP biosynthesis via de novo pathway; CTP from UDP: step 2/2. With respect to regulation, allosterically activated by GTP, when glutamine is the substrate; GTP has no effect on the reaction when ammonia is the substrate. The allosteric effector GTP functions by stabilizing the protein conformation that binds the tetrahedral intermediate(s) formed during glutamine hydrolysis. Inhibited by the product CTP, via allosteric rather than competitive inhibition. Catalyzes the ATP-dependent amination of UTP to CTP with either L-glutamine or ammonia as the source of nitrogen. Regulates intracellular CTP levels through interactions with the four ribonucleotide triphosphates. The sequence is that of CTP synthase from Polynucleobacter necessarius subsp. necessarius (strain STIR1).